Reading from the N-terminus, the 547-residue chain is Dihydrolipoyllysine-residue acetyltransferase component of pyruvate dehydrogenase complex (547 aa).

Residues 2–75 form the Lipoyl-binding 1 domain; that stretch reads SELIRVPDIG…KEGDEILELE (74 aa). Residue lysine 41 is modified to N6-lipoyllysine. The tract at residues 75–117 is disordered; the sequence is EVEGGEQPAEAKAEAAPAQPEAPKAEAPAPAPSESKPAAPAAA. Over residues 80–117 the composition is skewed to low complexity; it reads EQPAEAKAEAAPAQPEAPKAEAPAPAPSESKPAAPAAA. In terms of domain architecture, Lipoyl-binding 2 spans 119-193; it reads VQDIKVPDIG…GTGDLILKLK (75 aa). N6-lipoyllysine is present on lysine 159. The segment covering 202-231 has biased composition (low complexity); that stretch reads EEQPAAAPAQAAAPAAEQKPAAAAPAPAKA. Positions 202-248 are disordered; sequence EEQPAAAPAQAAAPAAEQKPAAAAPAPAKADTPAPVGAPSRDGAKVH. The Peripheral subunit-binding (PSBD) domain maps to 248-285; the sequence is HAGPAVRMLAREFGVELSEVKASGPKGRILKEDVQVFV. Histidine 520 is a catalytic residue.

It belongs to the 2-oxoacid dehydrogenase family. As to quaternary structure, forms a 24-polypeptide structural core with octahedral symmetry. (R)-lipoate is required as a cofactor.

The catalysed reaction is N(6)-[(R)-dihydrolipoyl]-L-lysyl-[protein] + acetyl-CoA = N(6)-[(R)-S(8)-acetyldihydrolipoyl]-L-lysyl-[protein] + CoA. The pyruvate dehydrogenase complex catalyzes the overall conversion of pyruvate to acetyl-CoA and CO(2). It contains multiple copies of three enzymatic components: pyruvate dehydrogenase (E1), dihydrolipoamide acetyltransferase (E2) and lipoamide dehydrogenase (E3). This chain is Dihydrolipoyllysine-residue acetyltransferase component of pyruvate dehydrogenase complex (aceF), found in Pseudomonas aeruginosa (strain ATCC 15692 / DSM 22644 / CIP 104116 / JCM 14847 / LMG 12228 / 1C / PRS 101 / PAO1).